A 229-amino-acid chain; its full sequence is Growth factor receptor-bound protein 2 (229 aa).

2 consecutive SH3 domains span residues 1–58 (MEAV…MKPH) and 168–227 (QQPT…PVNR). In terms of domain architecture, SH2 spans 60-171 (WFFGKIPRAK…RATNLLQQPT (112 aa)).

The protein resides in the nucleus. It is found in the cytoplasm. Its subcellular location is the endosome. The protein localises to the golgi apparatus. Functionally, adapter protein that provides a critical link between cell surface growth factor receptors and the Ras signaling pathway. Promotes meiotic reinitiation during oocyte maturation. This chain is Growth factor receptor-bound protein 2, found in Xenopus tropicalis (Western clawed frog).